A 952-amino-acid chain; its full sequence is Isoleucine--tRNA ligase (952 aa).

Positions 58-68 (PYANGDIHIGH) match the 'HIGH' region motif. Glu576 is a binding site for L-isoleucyl-5'-AMP. A 'KMSKS' region motif is present at residues 617-621 (KMSKS). Lys620 contacts ATP. Zn(2+) contacts are provided by Cys915, Cys918, Cys935, and Cys938.

This sequence belongs to the class-I aminoacyl-tRNA synthetase family. IleS type 1 subfamily. As to quaternary structure, monomer. Zn(2+) serves as cofactor.

Its subcellular location is the cytoplasm. The catalysed reaction is tRNA(Ile) + L-isoleucine + ATP = L-isoleucyl-tRNA(Ile) + AMP + diphosphate. Its function is as follows. Catalyzes the attachment of isoleucine to tRNA(Ile). As IleRS can inadvertently accommodate and process structurally similar amino acids such as valine, to avoid such errors it has two additional distinct tRNA(Ile)-dependent editing activities. One activity is designated as 'pretransfer' editing and involves the hydrolysis of activated Val-AMP. The other activity is designated 'posttransfer' editing and involves deacylation of mischarged Val-tRNA(Ile). This Vibrio atlanticus (strain LGP32) (Vibrio splendidus (strain Mel32)) protein is Isoleucine--tRNA ligase.